Consider the following 390-residue polypeptide: Fer-related kinase 1 (390 aa).

Positions 23–119 (YYHGMVPRQD…ASGAKIRRPM (97 aa)) constitute an SH2 domain. Positions 131-386 (IVANKKLGEG…SIHKKLREFY (256 aa)) constitute a Protein kinase domain. Residues 137-145 (LGEGAFGDV) and Lys161 contribute to the ATP site. The active-site Proton acceptor is the Asp252.

It belongs to the protein kinase superfamily. Tyr protein kinase family. Fes/fps subfamily. Interacts with hmp-2. Mn(2+) serves as cofactor.

The protein localises to the nucleus. It is found in the cytoplasm. The protein resides in the cell junction. Its subcellular location is the cell membrane. The enzyme catalyses L-tyrosyl-[protein] + ATP = O-phospho-L-tyrosyl-[protein] + ADP + H(+). Non-receptor tyrosine-protein kinase which plays a role in morphogenesis by regulating the epidermal enclosure of the embryo, independently of its kinase activity. Prevents hyperactivation of the Wnt signaling pathway during endoderm development, probably by preventing hmp-2 nuclear translocation. The protein is Fer-related kinase 1 of Caenorhabditis elegans.